Consider the following 314-residue polypeptide: Protein SPOROCYTELESS (314 aa).

The span at 1-17 shows a compositional bias: polar residues; sequence MATSLFFMSTDQNSVGN. 2 disordered regions span residues 1–20 and 33–62; these read MATSLFFMSTDQNSVGNPND and GEIRTETLKSRGRKPGSKTGQQKQKKPTLR. Positions 62-70 match the SPL motif; that stretch reads RGMGVAKLE. Positions 308 to 314 match the EAR motif; the sequence is IDLSLKL.

Belongs to the NOZZLE family. Homodimer and heterodimer with SPEARs. Interacts in vitro with YAB1, YAB3 and YAB4. Interacts (via EAR motif) with TPL, TPR1, TPR2, TPR3 and TPR4. Interacts with SPEAR1, SPEAR2, SPEAR3, SPEAR4, TCP1, TCP6, TCP8, TCP9, TCP11, TCP15, TCP20, TCP21 and TCP23. Interacts with TCP2, TCP3, TCP4, TCP5, TCP10, TCP13, TCP17 and TCP24. In terms of tissue distribution, expressed in flower buds. Not found in leaves, siliques and stems. Detected in rosette leaves, stem tissue and seedlings.

The protein resides in the nucleus. Functionally, transcriptional regulator of sporocyte development. Acts as an adapter-like transcriptional repressor recruiting TPL/TPR corepressors to inhibit TCP transcription factors. Required for nucellus and embryo sac development. Plays a central role in patterning both the proximal-distal and the adaxial-abaxial axes during ovule development. Involved in establishing the prospective chalaza of the ovule and in controlling the cell number and the length of the funiculus, and is required for the development of the integuments. Required, with BEL1, for cytokinin-induced PIN1 expression in ovules. Involved in controlling stamen identity. May also regulate the morphology of lateral organs by repressing auxin production. This Arabidopsis thaliana (Mouse-ear cress) protein is Protein SPOROCYTELESS.